The primary structure comprises 183 residues: Glutathione-regulated potassium-efflux system ancillary protein KefG (183 aa).

It belongs to the NAD(P)H dehydrogenase (quinone) family. KefG subfamily. In terms of assembly, interacts with KefB.

Its subcellular location is the cell inner membrane. The catalysed reaction is a quinone + NADH + H(+) = a quinol + NAD(+). It catalyses the reaction a quinone + NADPH + H(+) = a quinol + NADP(+). Regulatory subunit of a potassium efflux system that confers protection against electrophiles. Required for full activity of KefB. The polypeptide is Glutathione-regulated potassium-efflux system ancillary protein KefG (Shigella flexneri serotype 5b (strain 8401)).